The chain runs to 788 residues: Leucine-rich repeat and fibronectin type-III domain-containing protein 2 (788 aa).

A signal peptide spans 1-20; it reads METLLGGLLAFGMAFAVVDA. In terms of domain architecture, LRRNT spans 21 to 52; sequence CPKYCVCQNLSESLGTLCPSKGLLFVPPDIDR. Residues 21–534 are Extracellular-facing; it reads CPKYCVCQNL…MHSQILGGTM (514 aa). N-linked (GlcNAc...) asparagine glycans are attached at residues N29 and N74. 7 LRR repeats span residues 53-74, 77-98, 101-122, 125-146, 150-171, 174-195, and 198-219; these read RTVELRLGGNFIIHIGRQDFAN, GLVDLTLSRNTISHIQPFSFLD, SLRSLHLDSNRLPSLGEDTLRG, NLQHLIVNNNQLGGIADDAFED, TLEDLDLSYNNLHGLPWDSVRR, NLHQLSLDHNLLDHIAEGTFAD, and KLARLDLTSNRLQKLPPDPIFA. Positions 242–288 constitute an LRRCT domain; sequence NPLHCNCELLWLRRLERDDDLKTCGSPGGLKGRYFWHIREEEFVCEP. Residues 289 to 375 form the Ig-like domain; it reads PLITQHTHKL…GEATATVEVS (87 aa). C310 and C359 are disulfide-bonded. N-linked (GlcNAc...) asparagine glycans are attached at residues N332, N341, N384, and N457. Residues 383-423 form a disordered region; that stretch reads SNSTSRMAPPKSRLSDITGSSKTSRGGGGSGAGEPPKSTPE. One can recognise a Fibronectin type-III domain in the interval 422 to 518; sequence PERAVLVSDV…GCAQFFTKAD (97 aa). A helical membrane pass occupies residues 535 to 555; sequence ILVIGGIIVATLLVFIVILMV. At 556–788 the chain is on the cytoplasmic side; sequence RYKVCNHDAP…SSEWVMESTV (233 aa). Over residues 620 to 641 the composition is skewed to low complexity; sequence CDSSSSSSLGSGEAAGLSRGPW. Disordered stretches follow at residues 620 to 655 and 668 to 707; these read CDSSSSSSLGSGEAAGLSRGPWRLPPPAPRPKPSLD and SQRKEELLDSRTPAGRGAGTSARGHHSDREPLLGPPATRA. A compositionally biased stretch (pro residues) spans 642–651; that stretch reads RLPPPAPRPK. The PDZ-binding motif lies at 785–788; the sequence is ESTV.

This sequence belongs to the LRFN family. As to quaternary structure, forms heteromeric complexes with LRFN1, LRFN3 and LRFN4. Can form homomeric complexes, but not across cell junctions. Can form heteromeric complexes with LRFN5. Interacts with DLG1, DLG3 and DLG4; interaction with DLG4 is mediated by the PDZ-binding domain. Also interacts with DLG2. Interacts with 2 NMDA receptor subunits GRIN1 and GRIN2A.

The protein resides in the membrane. The protein localises to the synapse. It localises to the postsynaptic cell membrane. Functionally, promotes neurite outgrowth in hippocampal neurons. Enhances the cell surface expression of GRIN1 and GRIN2A NMDA receptor subunits. May play a role in redistributing DLG4 to the cell periphery. The sequence is that of Leucine-rich repeat and fibronectin type-III domain-containing protein 2 (Lrfn2) from Rattus norvegicus (Rat).